Reading from the N-terminus, the 442-residue chain is Cell adhesion molecule 1 (442 aa).

An N-terminal signal peptide occupies residues 1–44; that stretch reads MASVVLPSGSQCAAAAAAAAPPGLRLRLLLLLFSAAALIPTGDG. The region spanning 45–139 is the Ig-like V-type domain; the sequence is QNLFTKDVTV…PPQESYTTIT (95 aa). The Extracellular segment spans residues 45–374; sequence QNLFTKDVTV…EEGSIRAVDH (330 aa). Cysteines 64 and 124 form a disulfide. N-linked (GlcNAc...) asparagine glycosylation is found at N67, N101, N113, and N165. 2 consecutive Ig-like C2-type domains span residues 144–238 and 243–329; these read PRNL…RYLE and PQVH…YMLY. 2 cysteine pairs are disulfide-bonded: C166–C220 and C267–C313. N-linked (GlcNAc...) asparagine glycans are attached at residues N304 and N308. A helical membrane pass occupies residues 375–395; that stretch reads AVIGGVVAVVVFAMLCLLIIL. Residues 396–442 lie on the Cytoplasmic side of the membrane; that stretch reads GRYFARHKGTYFTHEAKGADDAADADTAIINAEGGQNNSEEKKEYFI. T422 carries the phosphothreonine modification. Residue S434 is modified to Phosphoserine.

This sequence belongs to the nectin family. In terms of assembly, homodimer (via Ig-like V-type domain). Interacts with FARP1. Interacts (via Ig-like V-type domain) with CRTAM (via Ig-like V-type domain); the interaction competes with CRTAM homodimerization and CADM1 homodimerization. Interacts (via C-terminus) with EPB41L3/DAL1. The interaction with EPB41L3/DAL1 may act to anchor CADM1 to the actin cytoskeleton. Interacts (via C-terminus) with MPP2 (via PDZ domain). Interacts (via C-terminus) with MPP3 (via PDZ domain); this interaction connects CADM1 with DLG1. Interacts (via C-terminus) with PALS2 (via PDZ domain). As to quaternary structure, (Microbial infection) Interacts with herpes virus 8 proteins vFLIP and vGPCR; these interactions are essential for NF-kappa-B activation. In terms of processing, glycosylation at Asn-67 and Asn-101 promotes adhesive binding and synapse induction.

Its subcellular location is the cell membrane. It localises to the synapse. Mediates homophilic cell-cell adhesion in a Ca(2+)-independent manner. Also mediates heterophilic cell-cell adhesion with CADM3 and NECTIN3 in a Ca(2+)-independent manner. Interaction with CRTAM promotes natural killer (NK) cell cytotoxicity and interferon-gamma (IFN-gamma) secretion by CD8+ cells in vitro as well as NK cell-mediated rejection of tumors expressing CADM1 in vivo. In mast cells, may mediate attachment to and promote communication with nerves. CADM1, together with MITF, is essential for development and survival of mast cells in vivo. By interacting with CRTAM and thus promoting the adhesion between CD8+ T-cells and CD8+ dendritic cells, regulates the retention of activated CD8+ T-cell within the draining lymph node. Required for the intestinal retention of intraepithelial CD4+ CD8+ T-cells and, to a lesser extent, intraepithelial and lamina propria CD8+ T-cells and CD4+ T-cells. Interaction with CRTAM promotes the adhesion to gut-associated CD103+ dendritic cells, which may facilitate the expression of gut-homing and adhesion molecules on T-cells and the conversion of CD4+ T-cells into CD4+ CD8+ T-cells. Acts as a synaptic cell adhesion molecule and plays a role in the formation of dendritic spines and in synapse assembly. May be involved in neuronal migration, axon growth, pathfinding, and fasciculation on the axons of differentiating neurons. May play diverse roles in the spermatogenesis including in the adhesion of spermatocytes and spermatids to Sertoli cells and for their normal differentiation into mature spermatozoa. Acts as a tumor suppressor in non-small-cell lung cancer (NSCLC) cells. May contribute to the less invasive phenotypes of lepidic growth tumor cells. Its function is as follows. (Microbial infection) Induces cell fusion in neuron infected by a neuropathogenic strain of measles. Interacts with measles hemagglutinin to trigger hyperfusogenic F-mediated membrane fusion and presumably transsynaptic cell-to-cell transmission of the virus. The chain is Cell adhesion molecule 1 from Homo sapiens (Human).